The following is a 418-amino-acid chain: Lactate dehydrogenase (NAD(+),ferredoxin) subunit LctC (418 aa).

FAD contacts are provided by residues Arg285, 325–328, 343–348, Asn362, and 380–381; these read IGLS, SGAVQF, and DL.

It belongs to the ETF alpha-subunit/FixB family. Part of the stable heterotrimeric lactate dehydrogenase-Etf complex, which is formed by the lactate dehydrogenase LctD and the electron-transferring flavoprotein (Etf) alpha (LctC) and beta (LctB) subunits. FAD is required as a cofactor. [4Fe-4S] cluster serves as cofactor.

The protein resides in the cytoplasm. It catalyses the reaction lactate + 2 reduced [2Fe-2S]-[ferredoxin] + 2 NAD(+) = 2 oxidized [2Fe-2S]-[ferredoxin] + pyruvate + 2 NADH. Its activity is regulated as follows. Activity is stimulated by divalent cations. Highest stimulation is observed with Ca(2+). The lactate dehydrogenase-Etf complex catalyzes the oxidation of lactate to pyruvate. It uses flavin-based electron confurcation to drive endergonic lactate oxidation with NAD(+) as oxidant at the expense of simultaneous exergonic electron flow from reduced ferredoxin to NAD(+). The electron transfer flavoprotein (Etf) mediates the electron transfer between the different donors and acceptors. The sequence is that of Lactate dehydrogenase (NAD(+),ferredoxin) subunit LctC from Acetobacterium woodii (strain ATCC 29683 / DSM 1030 / JCM 2381 / KCTC 1655 / WB1).